Here is an 880-residue protein sequence, read N- to C-terminus: Leucine--tRNA ligase (880 aa).

The short motif at 46 to 56 (PYPSGALHMGH) is the 'HIGH' region element. The tract at residues 483–502 (SPIKTEPTWRQTTCPDCGGP) is disordered. The 'KMSKS' region motif lies at 638–642 (KMSKS). Residue lysine 641 participates in ATP binding.

It belongs to the class-I aminoacyl-tRNA synthetase family.

The protein resides in the cytoplasm. The enzyme catalyses tRNA(Leu) + L-leucine + ATP = L-leucyl-tRNA(Leu) + AMP + diphosphate. The protein is Leucine--tRNA ligase of Xanthomonas oryzae pv. oryzae (strain PXO99A).